Consider the following 175-residue polypeptide: MSYNCCSGNFSSRSCGDYLRYPASSRGFSYPSNLVYSTDLCSPSTCQLGSSLYRGCQEICWEPTSCQTSYVESSPCQTSCYRPRTSLLCSPCKTTYSGSLGFGSSSCRSLGYGSRSCYSVGCGSSGVRSLGYGSCGFPSLGYGSGFCRPTYLASRSCQSPCYRPAYGSTFCRSTC.

5 consecutive repeat copies span residues 46–55, 56–65, 66–75, 76–85, and 92–101. Residues 46–101 are 5 X 10 AA approximate repeats; it reads CQLGSSLYRGCQEICWEPTSCQTSYVESSPCQTSCYRPRTSLLCSPCKTTYSGSLG.

It belongs to the PMG family. Interacts with hair keratins.

Its function is as follows. In the hair cortex, hair keratin intermediate filaments are embedded in an interfilamentous matrix, consisting of hair keratin-associated proteins (KRTAP), which are essential for the formation of a rigid and resistant hair shaft through their extensive disulfide bond cross-linking with abundant cysteine residues of hair keratins. The matrix proteins include the high-sulfur and high-glycine-tyrosine keratins. The protein is Keratin-associated protein 13-2 (KRTAP13-2) of Homo sapiens (Human).